The sequence spans 158 residues: uncharacterized protein (158 aa).

Belongs to the mimivirus L223/L227/L812 family.

This is an uncharacterized protein from Acanthamoeba polyphaga mimivirus (APMV).